A 345-amino-acid polypeptide reads, in one-letter code: Dihydroorotase (345 aa).

Zn(2+) is bound by residues His-14 and His-16. Residues 16-18 (HLR) and Asn-42 contribute to the substrate site. Residues Lys-100, His-137, and His-175 each coordinate Zn(2+). Lys-100 is subject to N6-carboxylysine. Substrate is bound at residue His-137. A substrate-binding site is contributed by Leu-220. Asp-248 is a binding site for Zn(2+). Asp-248 is a catalytic residue. Substrate is bound by residues His-252 and Ala-264.

The protein belongs to the metallo-dependent hydrolases superfamily. DHOase family. Class II DHOase subfamily. Homodimer. It depends on Zn(2+) as a cofactor.

It carries out the reaction (S)-dihydroorotate + H2O = N-carbamoyl-L-aspartate + H(+). It functions in the pathway pyrimidine metabolism; UMP biosynthesis via de novo pathway; (S)-dihydroorotate from bicarbonate: step 3/3. Functionally, catalyzes the reversible cyclization of carbamoyl aspartate to dihydroorotate. This is Dihydroorotase from Methylobacillus flagellatus (strain ATCC 51484 / DSM 6875 / VKM B-1610 / KT).